Reading from the N-terminus, the 207-residue chain is Large ribosomal subunit protein uL4 (207 aa).

The tract at residues 48-75 is disordered; the sequence is THSVKNRSAVRGGGRKPWRQKGTGRARQ. Positions 60–71 are enriched in basic residues; that stretch reads GGRKPWRQKGTG.

Belongs to the universal ribosomal protein uL4 family. In terms of assembly, part of the 50S ribosomal subunit.

One of the primary rRNA binding proteins, this protein initially binds near the 5'-end of the 23S rRNA. It is important during the early stages of 50S assembly. It makes multiple contacts with different domains of the 23S rRNA in the assembled 50S subunit and ribosome. Its function is as follows. Forms part of the polypeptide exit tunnel. This is Large ribosomal subunit protein uL4 from Staphylococcus carnosus (strain TM300).